A 64-amino-acid chain; its full sequence is Metallothionein-like protein 1 (64 aa).

Belongs to the metallothionein superfamily. Type 15 family.

Functionally, metallothioneins have a high content of cysteine residues that bind various heavy metals. In Prunus avium (Cherry), this protein is Metallothionein-like protein 1 (MT1).